We begin with the raw amino-acid sequence, 130 residues long: uncharacterized protein (130 aa).

The first 18 residues, 1–18, serve as a signal peptide directing secretion; sequence MVEVWWSLIGAAVPALIA.

This is an uncharacterized protein from Arabidopsis thaliana (Mouse-ear cress).